The sequence spans 203 residues: NADH-quinone oxidoreductase subunit C (203 aa).

It belongs to the complex I 30 kDa subunit family. As to quaternary structure, NDH-1 is composed of 14 different subunits. Subunits NuoB, C, D, E, F, and G constitute the peripheral sector of the complex.

The protein resides in the cell inner membrane. The enzyme catalyses a quinone + NADH + 5 H(+)(in) = a quinol + NAD(+) + 4 H(+)(out). Its function is as follows. NDH-1 shuttles electrons from NADH, via FMN and iron-sulfur (Fe-S) centers, to quinones in the respiratory chain. The immediate electron acceptor for the enzyme in this species is believed to be ubiquinone. Couples the redox reaction to proton translocation (for every two electrons transferred, four hydrogen ions are translocated across the cytoplasmic membrane), and thus conserves the redox energy in a proton gradient. The chain is NADH-quinone oxidoreductase subunit C from Bartonella tribocorum (strain CIP 105476 / IBS 506).